The primary structure comprises 329 residues: Protoheme IX farnesyltransferase (329 aa).

7 consecutive transmembrane segments (helical) span residues 61–81 (LACT…LNCL), 108–128 (AFLI…AGVN), 130–150 (LAAG…TIVL), 158–178 (IVIG…AATG), 186–206 (WLFG…ALLL), 243–263 (LLGV…VLPF), and 284–304 (AKGL…LLLL).

It belongs to the UbiA prenyltransferase family. Protoheme IX farnesyltransferase subfamily.

The protein resides in the cell inner membrane. It catalyses the reaction heme b + (2E,6E)-farnesyl diphosphate + H2O = Fe(II)-heme o + diphosphate. Its pathway is porphyrin-containing compound metabolism; heme O biosynthesis; heme O from protoheme: step 1/1. Its function is as follows. Converts heme B (protoheme IX) to heme O by substitution of the vinyl group on carbon 2 of heme B porphyrin ring with a hydroxyethyl farnesyl side group. The chain is Protoheme IX farnesyltransferase from Synechococcus sp. (strain RCC307).